A 130-amino-acid polypeptide reads, in one-letter code: Small ribosomal subunit protein uS8 (130 aa).

Belongs to the universal ribosomal protein uS8 family. As to quaternary structure, part of the 30S ribosomal subunit.

In terms of biological role, one of the primary rRNA binding proteins, it binds directly to 16S rRNA central domain where it helps coordinate assembly of the platform of the 30S subunit. In Methanococcus maripaludis (strain C7 / ATCC BAA-1331), this protein is Small ribosomal subunit protein uS8.